The sequence spans 589 residues: Mini-chromosome maintenance complex-binding protein (589 aa).

Residues 163–211 are disordered; that stretch reads VDEEMTDSMDSSTLEAGRNGSPFKKMKVGEATSSASESQVPQTSGIPPA. Residues 193–207 are compositionally biased toward polar residues; it reads ATSSASESQVPQTSG.

Belongs to the MCMBP family. In terms of assembly, interacts with the MCM complex.

It is found in the nucleus. In terms of biological role, associated component of the MCM complex that acts as a regulator of DNA replication. Binds to the MCM complex during late S phase and may act by promoting the disassembly of the MCM complex from chromatin. Required for sister chromatid cohesion. The protein is Mini-chromosome maintenance complex-binding protein (ETG1) of Arabidopsis thaliana (Mouse-ear cress).